The following is a 312-amino-acid chain: DNA-directed RNA polymerase subunit alpha (312 aa).

Positions Met1 to Thr226 are alpha N-terminal domain (alpha-NTD). Residues Asn242–Lys312 are alpha C-terminal domain (alpha-CTD).

It belongs to the RNA polymerase alpha chain family. Homodimer. The RNAP catalytic core consists of 2 alpha, 1 beta, 1 beta' and 1 omega subunit. When a sigma factor is associated with the core the holoenzyme is formed, which can initiate transcription.

The catalysed reaction is RNA(n) + a ribonucleoside 5'-triphosphate = RNA(n+1) + diphosphate. DNA-dependent RNA polymerase catalyzes the transcription of DNA into RNA using the four ribonucleoside triphosphates as substrates. This Streptococcus agalactiae serotype Ia (strain ATCC 27591 / A909 / CDC SS700) protein is DNA-directed RNA polymerase subunit alpha.